We begin with the raw amino-acid sequence, 678 residues long: MAVKVQTTKRGDPHELRNIFLQYASTEVDGERYMTPEDFVQRYLGLYNDPNSNPKIVQLLAGVADQTKDGLISYQEFLAFESVLCAPDSMFIVAFQLFDKSGNGEVTFENVKEIFGQTIIHHHIPFNWDCEFIRLHFGHNRKKHLNYTEFTQFLQELQLEHARQAFALKDKSKSGMISGLDFSDIMVTIRSHMLTPFVEENLVSAAGGSISHQVSFSYFNAFNSLLNNMELVRKIYSTLAGTRKDVEVTKEEFAQSAIRYGQVTPLEIDILYQLADLYNASGRLTLADIERIAPLAEGALPYNLAELQRQQSPGLGRPIWLQIAESAYRFTLGSVAGAVGATAVYPIDLVKTRMQNQRGSGSVVGELMYKNSFDCFKKVLRYEGFFGLYRGLIPQLIGVAPEKAIKLTVNDFVRDKFTRRDGSVPLPAEVLAGGCAGGSQVIFTNPLEIVKIRLQVAGEITTGPRVSALNVLRDLGIFGLYKGAKACFLRDIPFSAIYFPVYAHCKLLLADENGHVGGLNLLAAGAMAGVPAASLVTPADVIKTRLQVAARAGQTTYSGVIDCFRKILREEGPSAFWKGTAARVFRSSPQFGVTLVTYELLQRWFYIDFGGLKPAGSEPTPKSRIADLPPANPDHIGGYRLATATFAGIENKFGLYLPKFKSPSVAVVQPKAAVAATQ.

Ala-2 is modified (N-acetylalanine). The interval 2 to 294 (AVKVQTTKRG…TLADIERIAP (293 aa)) is regulatory N-terminal domain. At 2–329 (AVKVQTTKRG…WLQIAESAYR (328 aa)) the chain is on the mitochondrial intermembrane side. Asp-65, Thr-67, Asp-69, Leu-71, and Glu-76 together coordinate Ca(2+). 4 consecutive EF-hand domains span residues 65–76 (DQTKDGLISYQE), 86–121 (APDSMFIVAFQLFDKSGNGEVTFENVKEIFGQTIIH), 125–155 (PFNWDCEFIRLHFGHNRKKHLNYTEFTQFLQ), and 157–192 (LQLEHARQAFALKDKSKSGMISGLDFSDIMVTIRSH). The interval 295-310 (LAEGALPYNLAELQRQ) is linker loop domain. Positions 320 to 612 (WLQIAESAYR…RWFYIDFGGL (293 aa)) are carrier domain. Solcar repeat units lie at residues 324-416 (AESA…VRDK), 424-508 (VPLP…CKLL), and 516-604 (VGGL…LQRW). The helical transmembrane segment at 330–347 (FTLGSVAGAVGATAVYPI) threads the bilayer. Residues 348 to 390 (DLVKTRMQNQRGSGSVVGELMYKNSFDCFKKVLRYEGFFGLYR) lie on the Mitochondrial matrix side of the membrane. A helical transmembrane segment spans residues 391-410 (GLIPQLIGVAPEKAIKLTVN). Residues 411 to 433 (DFVRDKFTRRDGSVPLPAEVLAG) are Mitochondrial intermembrane-facing. Residues 434–447 (GCAGGSQVIFTNPL) form a helical membrane-spanning segment. Residues 448-482 (EIVKIRLQVAGEITTGPRVSALNVLRDLGIFGLYK) lie on the Mitochondrial matrix side of the membrane. Residues 483–502 (GAKACFLRDIPFSAIYFPVY) form a helical membrane-spanning segment. The Mitochondrial intermembrane portion of the chain corresponds to 503 to 521 (AHCKLLLADENGHVGGLNL). The chain crosses the membrane as a helical span at residues 522–539 (LAAGAMAGVPAASLVTPA). The Mitochondrial matrix segment spans residues 540–578 (DVIKTRLQVAARAGQTTYSGVIDCFRKILREEGPSAFWK). A helical membrane pass occupies residues 579–598 (GTAARVFRSSPQFGVTLVTY). At 599–678 (ELLQRWFYID…QPKAAVAATQ (80 aa)) the chain is on the mitochondrial intermembrane side. The segment at 613-675 (KPAGSEPTPK…AVVQPKAAVA (63 aa)) is C-terminal domain.

It belongs to the mitochondrial carrier (TC 2.A.29) family. In terms of assembly, homodimer (via N-terminus). Expressed predominantly in the heart and skeletal muscle, weakly in brain and kidney.

It is found in the mitochondrion inner membrane. The catalysed reaction is L-aspartate(in) + L-glutamate(out) + H(+)(out) = L-aspartate(out) + L-glutamate(in) + H(+)(in). The enzyme catalyses 3-sulfino-L-alanine(out) + L-glutamate(in) + H(+)(in) = 3-sulfino-L-alanine(in) + L-glutamate(out) + H(+)(out). It catalyses the reaction 3-sulfino-L-alanine(out) + L-aspartate(in) = 3-sulfino-L-alanine(in) + L-aspartate(out). With respect to regulation, activated by calcium-binding in the mitochondrial intermembrane space. Inhibited by pyridoxal 5'-phosphate, bathophenathroline, mercurials, diethyl pyrocarbonate and N-ethylmaleimide. In terms of biological role, mitochondrial electrogenic aspartate/glutamate antiporter that favors efflux of aspartate and entry of glutamate and proton within the mitochondria as part of the malate-aspartate shuttle. Also mediates the uptake of L-cysteinesulfinate (3-sulfino-L-alanine) by mitochondria in exchange of L-glutamate and proton. Can also exchange L-cysteinesulfinate with aspartate in their anionic form without any proton translocation. Lacks transport activity towards L-glutamine or gamma-aminobutyric acid (GABA). The chain is Electrogenic aspartate/glutamate antiporter SLC25A12, mitochondrial from Homo sapiens (Human).